The sequence spans 283 residues: NAD kinase (283 aa).

D66 serves as the catalytic Proton acceptor. Residues 66-67 (DG), 140-141 (ND), R151, K168, D170, 181-186 (TGYCLS), and Q240 each bind NAD(+).

Belongs to the NAD kinase family. Requires a divalent metal cation as cofactor.

Its subcellular location is the cytoplasm. The catalysed reaction is NAD(+) + ATP = ADP + NADP(+) + H(+). Its function is as follows. Involved in the regulation of the intracellular balance of NAD and NADP, and is a key enzyme in the biosynthesis of NADP. Catalyzes specifically the phosphorylation on 2'-hydroxyl of the adenosine moiety of NAD to yield NADP. This Geobacter metallireducens (strain ATCC 53774 / DSM 7210 / GS-15) protein is NAD kinase.